The chain runs to 81 residues: Photosystem I iron-sulfur center (81 aa).

2 consecutive 4Fe-4S ferredoxin-type domains span residues 2 to 31 (SHSV…MIPW) and 39 to 68 (IASA…VRVY). The [4Fe-4S] cluster site is built by Cys11, Cys14, Cys17, Cys21, Cys48, Cys51, Cys54, and Cys58.

As to quaternary structure, the eukaryotic PSI reaction center is composed of at least 11 subunits. [4Fe-4S] cluster serves as cofactor.

The protein resides in the plastid. It is found in the chloroplast thylakoid membrane. It carries out the reaction reduced [plastocyanin] + hnu + oxidized [2Fe-2S]-[ferredoxin] = oxidized [plastocyanin] + reduced [2Fe-2S]-[ferredoxin]. Apoprotein for the two 4Fe-4S centers FA and FB of photosystem I (PSI); essential for photochemical activity. FB is the terminal electron acceptor of PSI, donating electrons to ferredoxin. The C-terminus interacts with PsaA/B/D and helps assemble the protein into the PSI complex. Required for binding of PsaD and PsaE to PSI. PSI is a plastocyanin-ferredoxin oxidoreductase, converting photonic excitation into a charge separation, which transfers an electron from the donor P700 chlorophyll pair to the spectroscopically characterized acceptors A0, A1, FX, FA and FB in turn. The chain is Photosystem I iron-sulfur center from Zea mays (Maize).